The chain runs to 225 residues: Ribosomal RNA small subunit methyltransferase G (225 aa).

Residues Gly-84, Phe-89, 107 to 109 (DST), 135 to 136 (AE), and Arg-154 each bind S-adenosyl-L-methionine.

This sequence belongs to the methyltransferase superfamily. RNA methyltransferase RsmG family.

Its subcellular location is the cytoplasm. Its function is as follows. Specifically methylates the N7 position of a guanine in 16S rRNA. In Microcystis aeruginosa (strain NIES-843 / IAM M-2473), this protein is Ribosomal RNA small subunit methyltransferase G.